We begin with the raw amino-acid sequence, 293 residues long: Homoserine kinase (293 aa).

83–93 serves as a coordination point for ATP; that stretch reads RPKSGLGSSGA.

Belongs to the GHMP kinase family. Homoserine kinase subfamily.

The protein localises to the cytoplasm. The enzyme catalyses L-homoserine + ATP = O-phospho-L-homoserine + ADP + H(+). Its pathway is amino-acid biosynthesis; L-threonine biosynthesis; L-threonine from L-aspartate: step 4/5. Functionally, catalyzes the ATP-dependent phosphorylation of L-homoserine to L-homoserine phosphate. This is Homoserine kinase from Pyrococcus horikoshii (strain ATCC 700860 / DSM 12428 / JCM 9974 / NBRC 100139 / OT-3).